The following is a 187-amino-acid chain: Interferon beta (187 aa).

Residues 1 to 21 form the signal peptide; sequence MTNKCLLQIALLLCFSTTALS. Position 24 is a phosphotyrosine (Tyr24). Cys52 and Cys162 form a disulfide bridge. Asn101 carries N-linked (GlcNAc...) asparagine glycosylation.

This sequence belongs to the alpha/beta interferon family. In terms of assembly, monomer.

The protein localises to the secreted. Its function is as follows. Type I interferon cytokine that plays a key role in the innate immune response to infection, developing tumors and other inflammatory stimuli. Signals via binding to high-affinity (IFNAR2) and low-affinity (IFNAR1) heterodimeric receptor, activating the canonical Jak-STAT signaling pathway resulting in transcriptional activation or repression of interferon-regulated genes that encode the effectors of the interferon response, such as antiviral proteins, regulators of cell proliferation and differentiation, and immunoregulatory proteins. Signals mostly via binding to a IFNAR1-IFNAR2 heterodimeric receptor, but can also function with IFNAR1 alone and independently of Jak-STAT pathways. Elicits a wide variety of responses, including antiviral and antibacterial activities, and can regulate the development of B-cells, myelopoiesis and lipopolysaccharide (LPS)-inducible production of tumor necrosis factor. Plays a role in neuronal homeostasis by regulating dopamine turnover and protecting dopaminergic neurons: acts by promoting neuronal autophagy and alpha-synuclein clearance, thereby preventing dopaminergic neuron loss. IFNB1 is more potent than interferon-alpha (IFN-alpha) in inducing the apoptotic and antiproliferative pathways required for control of tumor cell growth. The polypeptide is Interferon beta (IFNB1) (Macaca fascicularis (Crab-eating macaque)).